The sequence spans 268 residues: Undecaprenyl-diphosphatase (268 aa).

Transmembrane regions (helical) follow at residues 4–24 (STTLVALVLGLLEGLTEFIPV), 50–70 (IQLGAVLAVLTVYASKLISVI), 84–104 (AAVLLAFLPAVVVGVMAHGFI), 109–129 (FETPILIAIMLILGGIILLFV), 144–164 (VPLGVALKIGFFQCLAMVPGV), 184–204 (AAEFSFFLSMPTMAGAFAFDL), 214–234 (GALGEIAVGFVAAFLAAVLVV), and 245–265 (GYSLFGWWRIIVGSIALAALL).

It belongs to the UppP family.

It localises to the cell inner membrane. The enzyme catalyses di-trans,octa-cis-undecaprenyl diphosphate + H2O = di-trans,octa-cis-undecaprenyl phosphate + phosphate + H(+). Functionally, catalyzes the dephosphorylation of undecaprenyl diphosphate (UPP). Confers resistance to bacitracin. This is Undecaprenyl-diphosphatase from Cereibacter sphaeroides (strain ATCC 17025 / ATH 2.4.3) (Rhodobacter sphaeroides).